A 69-amino-acid polypeptide reads, in one-letter code: Conotoxin Eb6.9 (69 aa).

The first 17 residues, 1-17, serve as a signal peptide directing secretion; the sequence is VLIIAVLFLTACQLTTA. Residues 18–41 constitute a propeptide that is removed on maturation; that stretch reads ETYSRGRQKHRARRSTDKNSKWTR. 3 disulfides stabilise this stretch: C43–C57, C50–C61, and C56–C68.

This sequence belongs to the conotoxin O1 superfamily. As to expression, expressed by the venom duct.

It is found in the secreted. This chain is Conotoxin Eb6.9 (E1), found in Conus ebraeus (Hebrew cone).